A 382-amino-acid chain; its full sequence is Homoserine O-acetyltransferase (382 aa).

The region spanning asparagine 52 to glutamate 356 is the AB hydrolase-1 domain. Residue serine 157 is the Nucleophile of the active site. Position 227 (arginine 227) interacts with substrate. Catalysis depends on residues aspartate 320 and histidine 350. Residue aspartate 351 participates in substrate binding.

It belongs to the AB hydrolase superfamily. MetX family. In terms of assembly, homodimer.

The protein resides in the cytoplasm. The catalysed reaction is L-homoserine + acetyl-CoA = O-acetyl-L-homoserine + CoA. It participates in amino-acid biosynthesis; L-methionine biosynthesis via de novo pathway; O-acetyl-L-homoserine from L-homoserine: step 1/1. Its function is as follows. Transfers an acetyl group from acetyl-CoA to L-homoserine, forming acetyl-L-homoserine. The chain is Homoserine O-acetyltransferase from Mycobacterium leprae (strain TN).